A 180-amino-acid polypeptide reads, in one-letter code: Inosine/xanthosine triphosphatase (180 aa).

Residue 8-13 (TTNPAK) coordinates substrate. Aspartate 38 and glutamate 68 together coordinate Mg(2+). A substrate-binding site is contributed by 68–69 (EA).

Belongs to the YjjX NTPase family. In terms of assembly, homodimer. Requires Mg(2+) as cofactor. It depends on Mn(2+) as a cofactor.

It catalyses the reaction XTP + H2O = XDP + phosphate + H(+). The catalysed reaction is ITP + H2O = IDP + phosphate + H(+). Phosphatase that hydrolyzes non-canonical purine nucleotides such as XTP and ITP to their respective diphosphate derivatives. Probably excludes non-canonical purines from DNA/RNA precursor pool, thus preventing their incorporation into DNA/RNA and avoiding chromosomal lesions. This Yersinia pseudotuberculosis serotype IB (strain PB1/+) protein is Inosine/xanthosine triphosphatase.